Reading from the N-terminus, the 94-residue chain is UPF0298 protein SZO_03600 (94 aa).

It belongs to the UPF0298 family.

Its subcellular location is the cytoplasm. This chain is UPF0298 protein SZO_03600, found in Streptococcus equi subsp. zooepidemicus (strain H70).